Here is a 228-residue protein sequence, read N- to C-terminus: General odorant-binding protein 71 (228 aa).

The signal sequence occupies residues 1 to 20; the sequence is MCGAIVLLLLVGTSPAPVEG. The interval 50–131 is disordered; that stretch reads TMGEWGQRDR…GNSSSSSSST (82 aa). Basic and acidic residues predominate over residues 55–72; it reads GQRDRNGEEQQMMRDYGR. Residues 83 to 99 are compositionally biased toward low complexity; it reads GGQTSGSSSSGSAGEHS. Gly residues predominate over residues 111 to 120; sequence AGQGGNGTRS. The segment covering 121 to 131 has biased composition (low complexity); sequence GGNSSSSSSST. 2 disulfide bridges follow: Cys-138–Cys-199 and Cys-185–Cys-208.

The protein belongs to the PBP/GOBP family.

The protein resides in the secreted. Functionally, present in the aqueous fluid surrounding olfactory sensory dendrites and are thought to aid in the capture and transport of hydrophobic odorants into and through this fluid. The sequence is that of General odorant-binding protein 71 (Obp71) from Anopheles gambiae (African malaria mosquito).